The sequence spans 98 residues: Large ribosomal subunit protein uL23 (98 aa).

The protein belongs to the universal ribosomal protein uL23 family. As to quaternary structure, part of the 50S ribosomal subunit. Contacts protein L29, and trigger factor when it is bound to the ribosome.

Functionally, one of the early assembly proteins it binds 23S rRNA. One of the proteins that surrounds the polypeptide exit tunnel on the outside of the ribosome. Forms the main docking site for trigger factor binding to the ribosome. This is Large ribosomal subunit protein uL23 from Rickettsia prowazekii (strain Madrid E).